Reading from the N-terminus, the 1296-residue chain is Protein STU1 (1296 aa).

4 disordered regions span residues 258-287 (ATSAPVLSPPAPTTFAPTTRSQFNSSHGAD), 735-793 (LSQT…PPVT), 888-946 (ALQQ…HISA), and 953-972 (TTSHRVLSSTPSRRAPTNGV). Residues 277 to 287 (RSQFNSSHGAD) show a composition bias toward polar residues. Low complexity-rich tracts occupy residues 755 to 782 (SARSRAISSSSYSSQGSSSSARMQGAAS), 900 to 919 (TISTSSTSSTNSSTTPASAS), and 933 to 946 (HSPSPSASASHISA). Over residues 953–964 (TTSHRVLSSTPS) the composition is skewed to polar residues.

It belongs to the CLASP family. As to quaternary structure, interacts with microtubules.

It is found in the cytoplasm. It localises to the cytoskeleton. The protein localises to the nucleus. The protein resides in the spindle. Its function is as follows. Microtubule binding protein that promotes the stabilization of dynamic microtubules. Required for mitotic spindle formation. The polypeptide is Protein STU1 (STU1) (Mycosarcoma maydis (Corn smut fungus)).